The sequence spans 501 residues: MTTIIIDSTVDLYYDHDEQLKKIRLKEPFYFKIPSGLEVQIGQNKFIIVEELHIEPDVNTLLSNVCEKGIIQEIPSDTSIIPECYGFSTRLESPLKVYLPLDTKVKLPVGTKLKQKEIYAFFNLETEVDGIIFSSVIPSILVDRLNVKIDIEGNTVNNEYLMNIPLYEKHEDLLIDFEEKTSPNNKSRNKSRNESQDKSRDKSRKKVCNTHKNKKTLDNVKPDKNIKISVSSNKFTTNKPKSNKNSSDSDGSTKTTKSTRSTKSTKSSKSQKSTRNSDVKLIELSDSNQYSEDIPLVRKKKNKNPKESINHKKNDSKQNIFVEKFKNKNNKNDSTNCRKSNRTTTRDVTNSDSEQKVENKNRSWLSESISSESDKSDSEQSDLTEDETEENVSEEDETEEDETACYIDNKDYRKLLSKLSQYLEPKYDIVKIANYIWVNWDLKKINKMGVKDVLSLFLEGNNNRLNESDFYLKNYKLFDSDDTDDTDDTNNSCSSEVDDSD.

2 disordered regions span residues 179–404 and 480–501; these read EKTS…DETA and SDDTDDTDDTNNSCSSEVDDSD. The span at 191-200 shows a compositional bias: basic and acidic residues; it reads SRNESQDKSR. A compositionally biased stretch (basic residues) spans 201 to 214; it reads DKSRKKVCNTHKNK. Basic and acidic residues predominate over residues 215–226; the sequence is KTLDNVKPDKNI. The span at 231–274 shows a compositional bias: low complexity; sequence SSNKFTTNKPKSNKNSSDSDGSTKTTKSTRSTKSTKSSKSQKST. Residues 304 to 316 show a composition bias toward basic and acidic residues; it reads NPKESINHKKNDS. The span at 333-352 shows a compositional bias: polar residues; the sequence is DSTNCRKSNRTTTRDVTNSD. Residues 379 to 403 show a composition bias toward acidic residues; sequence EQSDLTEDETEENVSEEDETEEDET.

This is an uncharacterized protein from Acanthamoeba polyphaga mimivirus (APMV).